A 484-amino-acid chain; its full sequence is MAIPVESFFLAPGGQGSLQHRLRQMVTEGILSGRFRPGDRMPSTRALAAHLGVARITVTLAYADLVASDYLLARGRSGTFVSAAAPDARKARPLPRDGARTDWARLLHPRAQGLPRPDRPRDWSLYRYPFIYGQADPELFDHQNWRACALQALGRREFHRLSADCYDEDDPLLVEYILRHILPRRGIAAVPSEVLITMGAQNGLWLAAQVLLGPGERAAMENPGYPGTRAVLGTTGAEVLSVDVDDRGLVPAQLPARLKLVVTTASHHCPTNATLPVERRLALLAAAEAGDFLILEDDYEFEMSFLQSAAPSLKSLDAGGRVVHVGSFSKSLFPGLRLGYLVAPAPFVAAVRALRATVLRHPPGQLQRTLALFLSLGHYDALVARMKAAYRLRREVMTKAIEDNGLQIAGQGGFGGSSFWMQAPGAVDTEDLALRLRAEGVLIEPGRVFFDPARERRNFYRLAYSSIGPAAIPEGIARIARALR.

Positions 16-84 (GSLQHRLRQM…GRSGTFVSAA (69 aa)) constitute an HTH gntR-type domain. A DNA-binding region (H-T-H motif) is located at residues 44-63 (TRALAAHLGVARITVTLAYA). N6-(pyridoxal phosphate)lysine is present on K330.

The protein in the C-terminal section; belongs to the class-I pyridoxal-phosphate-dependent aminotransferase family. Requires pyridoxal 5'-phosphate as cofactor.

Its function is as follows. Transcriptional activator, which is essential for taurine-dependent expression of the tpa-tauR-xsc operon. Acts by binding to direct repeats in the promoter region. The protein is HTH-type transcriptional regulator TauR of Rhodobacter capsulatus (strain ATCC BAA-309 / NBRC 16581 / SB1003).